A 91-amino-acid polypeptide reads, in one-letter code: Large ribosomal subunit protein eL34 (91 aa).

The segment at 48–69 is disordered; it reads RGRPVEMRKLPKTKKRPERPMP.

The protein belongs to the eukaryotic ribosomal protein eL34 family.

The protein is Large ribosomal subunit protein eL34 (rpl34e) of Pyrococcus horikoshii (strain ATCC 700860 / DSM 12428 / JCM 9974 / NBRC 100139 / OT-3).